Consider the following 1048-residue polypeptide: MLRASAMRAAVLHLTVALAALLSSCTTVSCLKIVPEEKQLILAEGSSLSLTCAGSSETTWDLKSDDVPFFQMKAESSDLNYKIVQSNSTASVLTLWHVDWKNTAVYQCREQLTGEIKEVAVFVPDRFSPQTLRFIESSHGMVTKTSGESTVPCVVTNPNITVTLYDKDTDLPVNGVYVPSEGFKAYLDYRTYVCRGELNGEVKESQAFNVYSIHVPEDIDAYVNASQTVLKQGEPLTVNCTVQGVELVLFSWDIPNRDIVKHKPETVVLSATTMRSCLVFPHATVAHSGTYVCHAHESTQDQKAFASVNITVLERGFVAVKSTRKQNITAELQENVELRVEIEAYPPPQIRWKKDGAPVRGDKTIIIRQEHEIRYVTILTLVRVRTEQKGLYTALITNEDDVKEVTFALEVQVLARIKDLTDHHLPGKKQLVTCVAEGVPTPTIQWYSCDSMLKCNNQTSLWQQLKADPELLSIHTSVTEARQTNQVRSQVTFFKPQHTTVRCETTNQEGLIDFRDVKLVSSSLFSQVVLLAVVLTLVPIIIMSIIILIAVWKKKPRYEIRWKVIESVSQDGHEYIYVDPIHLPYDLAWEMPRDNLVLGRTLGSGAFGRVVEATAHGLSHSQSSIKVAVKMLKATARRSETQALMSELKIMSHLGPHLNIVNLLAACTKHGPLYLVTEYCRYGDLVDYLHRNKHTFLQYYLDKNQDDGSLISGGSTPLSQRKGYVSFGSESDGGYMDMSKDEPAVYVPMQEQMDTIKYADIQPSPYESPYQQDLYQEQGGGRVDLVISDSPALTYDDLLGFSYQVAKGMEFLASKNCVHRDLAARNVLICEGKLVKICDFGLARDIMHDSNYISKGSTFLPLKWMAPESIFHNLYTTLSDVWSYGILLWEIFTLGGTPYPDLPMNELFYSPLKRGYRMAKPAHASDEVYEIMKRCWDETFEKRPDFSFLVHCVGDMLTDSYKKKYSQVNETFLKSDHPAVARTKPRLSSPFPIANPAFGSPSLVGLSDFPDPYNQNTRRFRNEAEVQEGVTSFNEYIIPIPDPKPEKS.

A signal peptide spans 1–30 (MLRASAMRAAVLHLTVALAALLSSCTTVSC). Topologically, residues 31 to 528 (LKIVPEEKQL…LVSSSLFSQV (498 aa)) are extracellular. The region spanning 35 to 124 (PEEKQLILAE…EIKEVAVFVP (90 aa)) is the Ig-like C2-type 1 domain. Intrachain disulfides connect Cys-52/Cys-108 and Cys-153/Cys-194. Asn-87, Asn-159, Asn-224, and Asn-239 each carry an N-linked (GlcNAc...) asparagine glycan. 2 Ig-like C2-type domains span residues 216–309 (PEDI…ASVN) and 319–406 (AVKS…KEVT). Residues Cys-240 and Cys-293 are joined by a disulfide bond. Residues Asn-309, Asn-327, and Asn-457 are each glycosylated (N-linked (GlcNAc...) asparagine). Cys-434 and Cys-503 are disulfide-bonded. A helical transmembrane segment spans residues 529–549 (VLLAVVLTLVPIIIMSIIILI). Residues 550 to 1048 (AVWKKKPRYE…PIPDPKPEKS (499 aa)) are Cytoplasmic-facing. Phosphotyrosine; by autocatalysis occurs at positions 558, 575, and 577. In terms of domain architecture, Protein kinase spans 596 to 957 (LVLGRTLGSG…FLVHCVGDML (362 aa)). ATP-binding positions include 602–610 (LGSGAFGRV) and Lys-630. 5 positions are modified to phosphotyrosine; by autocatalysis: Tyr-735, Tyr-746, Tyr-758, Tyr-766, and Tyr-770. Asp-821 (proton acceptor) is an active-site residue. A phosphotyrosine; by autocatalysis mark is found at Tyr-852 and Tyr-1036.

The protein belongs to the protein kinase superfamily. Tyr protein kinase family. CSF-1/PDGF receptor subfamily. As to quaternary structure, interacts with homodimeric PDGFB and PDGFD, and with heterodimers formed by PDGFA and PDGFB. Monomer in the absence of bound ligand. Interaction with homodimeric PDGFB, heterodimers formed by PDGFA and PDGFB or homodimeric PDGFD, leads to receptor dimerization, where both PDGFRA homodimers and heterodimers with PDGFRB are observed. Ubiquitinated. After autophosphorylation, the receptor is polyubiquitinated, leading to its degradation. Post-translationally, autophosphorylated on tyrosine residues upon ligand binding. Autophosphorylation occurs in trans, i.e. one subunit of the dimeric receptor phosphorylates tyrosine residues on the other subunit.

It is found in the cell membrane. The protein localises to the cytoplasmic vesicle. The protein resides in the lysosome lumen. The catalysed reaction is L-tyrosyl-[protein] + ATP = O-phospho-L-tyrosyl-[protein] + ADP + H(+). With respect to regulation, present in an inactive conformation in the absence of bound ligand. Binding of PDGFB and/or PDGFD leads to dimerization and activation by autophosphorylation on tyrosine residues. Its function is as follows. Tyrosine-protein kinase that acts as a cell-surface receptor for homodimeric PDGFB and PDGFD and for heterodimers formed by PDGFA and PDGFB, and plays an essential role in the regulation of embryonic development, cell proliferation, survival, differentiation, chemotaxis and migration. Plays an essential role in blood vessel development by promoting proliferation, migration and recruitment of pericytes and smooth muscle cells to endothelial cells. Required for normal development of the cardiovascular system. Required for normal recruitment of pericytes (mesangial cells) in the kidney glomerulus, and for normal formation of a branched network of capillaries in kidney glomeruli. Promotes rearrangement of the actin cytoskeleton and the formation of membrane ruffles. Binding of its cognate ligands - homodimeric PDGFB, heterodimers formed by PDGFA and PDGFB or homodimeric PDGFD -leads to the activation of several signaling cascades; the response depends on the nature of the bound ligand and is modulated by the formation of heterodimers between PDGFRA and PDGFRB. Receptor signaling is down-regulated by protein phosphatases that dephosphorylate the receptor and its down-stream effectors, and by rapid internalization of the activated receptor. This Takifugu rubripes (Japanese pufferfish) protein is Platelet-derived growth factor receptor beta (pdgfrb).